The sequence spans 181 residues: Caltractin ICL1a (181 aa).

The tract at residues 1-29 is disordered; it reads MARRGQQPPPQQAPPAQKNQPGKFNPAEF. The span at 14–23 shows a compositional bias: low complexity; the sequence is PPAQKNQPGK. EF-hand domains lie at 37-72, 73-108, 110-145, and 146-181; these read EEVL…LGFE, AKNQ…RISE, DSKA…LGET, and MDDS…KTFA. Ca(2+) is bound by residues Asp50, Asp52, Thr54, Ser56, Glu61, Asp86, Asp88, Ser90, Gln92, and Glu97.

Belongs to the centrin family. As to quaternary structure, monomer.

Its subcellular location is the cytoplasm. The protein resides in the cytoskeleton. In terms of biological role, plays a fundamental role in microtubule organizing center structure and function. Component of the infraciliary lattice (ICL) and the ciliary basal bodies. This is Caltractin ICL1a (Icl1a) from Paramecium tetraurelia.